We begin with the raw amino-acid sequence, 190 residues long: Recombination protein RecR (190 aa).

The C4-type zinc finger occupies Cys-58 to Cys-73. The region spanning Asn-81 to Pro-167 is the Toprim domain.

The protein belongs to the RecR family.

Its function is as follows. May play a role in DNA repair. It seems to be involved in an RecBC-independent recombinational process of DNA repair. It may act with RecF and RecO. The sequence is that of Recombination protein RecR from Campylobacter jejuni subsp. jejuni serotype O:6 (strain 81116 / NCTC 11828).